A 646-amino-acid chain; its full sequence is A-kinase anchor protein 8-like (646 aa).

The interval 1 to 268 is sufficient for activation of CTE-mediated expression; that stretch reads MSYTGFVQGS…MRRTWKTWTT (268 aa). Residue Arg-208 is modified to Asymmetric dimethylarginine; alternate. The residue at position 208 (Arg-208) is an Omega-N-methylarginine; alternate. Residues Arg-217, Arg-237, and Arg-247 each carry the omega-N-methylarginine modification. At Lys-257 the chain carries N6-acetyllysine. Residues 264–381 form a disordered region; it reads KTWTTADFRT…QDKQKKRQRD (118 aa). Position 267 is a phosphothreonine (Thr-267). The Nuclear localization signal motif lies at 274 to 279; that stretch reads KKKKRK. The Nuclear export signal (NES) motif lies at 280–296; sequence QGGSPDEPDSKATRTDC. Position 283 is a phosphoserine (Ser-283). Residues 287–296 are compositionally biased toward basic and acidic residues; sequence PDSKATRTDC. Thr-292 carries the phosphothreonine modification. The residue at position 297 (Ser-297) is a Phosphoserine. Residues 298–314 show a composition bias toward acidic residues; it reads DNSDSDNDEGTEGEATE. Over residues 337 to 349 the composition is skewed to basic and acidic residues; that stretch reads EDGREEGKEDPEK. The Nuclear localization signal signature appears at 362-364; the sequence is KRK. 2 consecutive C2H2 AKAP95-type zinc fingers follow at residues 391-413 and 484-507; these read CSLC…SKFH and CAAC…TMDH. Residues 545-646 form a disordered region; sequence GENPFTDSPE…DDEEGGGGAP (102 aa). Ser-552 carries the phosphoserine modification. Residues 552 to 563 show a composition bias toward acidic residues; it reads SPEEEKEQEEAE. The segment covering 564 to 586 has biased composition (low complexity); it reads GGALDEGAQGEAAGISEGAEGVP. Residues 587–607 show a composition bias toward pro residues; that stretch reads AQPPVPPEPAPGAVSPPPPPP. The span at 634–646 shows a compositional bias: acidic residues; that stretch reads DVEDDEEGGGGAP.

This sequence belongs to the AKAP95 family. Interacts (via N-terminus) with DHX9 (via RGG region). Interacts with TMPO isoform Beta, PRPF40A, RNF43, lamin-B. Interacts with HDAC3; increased during mitosis. Interacts with EBV EBNA-LP. Interacts with HIV-1 reverse transcriptase/ribonuclease H. Phosphorylated on serine or threonine residues possibly by PKA; probably modulating the interaction with TMPO isoform Beta. In terms of tissue distribution, ubiquitously expressed. Expressed in the brain cortex (at protein level).

The protein resides in the nucleus. Its subcellular location is the nucleus matrix. It localises to the nucleus speckle. It is found in the PML body. The protein localises to the cytoplasm. Could play a role in constitutive transport element (CTE)-mediated gene expression by association with DHX9. Increases CTE-dependent nuclear unspliced mRNA export. Proposed to target PRKACA to the nucleus but does not seem to be implicated in the binding of regulatory subunit II of PKA. May be involved in nuclear envelope breakdown and chromatin condensation. May be involved in anchoring nuclear membranes to chromatin in interphase and in releasing membranes from chromating at mitosis. May regulate the initiation phase of DNA replication when associated with TMPO isoform Beta. Required for cell cycle G2/M transition and histone deacetylation during mitosis. In mitotic cells recruits HDAC3 to the vicinity of chromatin leading to deacetylation and subsequent phosphorylation at 'Ser-10' of histone H3; in this function seems to act redundantly with AKAP8. May be involved in regulation of pre-mRNA splicing. Functionally, (Microbial infection) In case of EBV infection, may target PRKACA to EBNA-LP-containing nuclear sites to modulate transcription from specific promoters. In terms of biological role, (Microbial infection) Can synergize with DHX9 to activate the CTE-mediated gene expression of type D retroviruses. Its function is as follows. (Microbial infection) In case of HIV-1 infection, involved in the DHX9-promoted annealing of host tRNA(Lys3) to viral genomic RNA as a primer in reverse transcription; in vitro negatively regulates DHX9 annealing activity. This Homo sapiens (Human) protein is A-kinase anchor protein 8-like (AKAP8L).